Consider the following 203-residue polypeptide: V-type ATP synthase subunit D (203 aa).

Belongs to the V-ATPase D subunit family.

Produces ATP from ADP in the presence of a proton gradient across the membrane. This chain is V-type ATP synthase subunit D, found in Streptococcus pneumoniae (strain CGSP14).